We begin with the raw amino-acid sequence, 74 residues long: Small ribosomal subunit protein eS17 (74 aa).

Belongs to the eukaryotic ribosomal protein eS17 family.

The sequence is that of Small ribosomal subunit protein eS17 from Ignicoccus hospitalis (strain KIN4/I / DSM 18386 / JCM 14125).